A 201-amino-acid polypeptide reads, in one-letter code: MDKFTTLEGVAAPLKIINVDTDMIIPKQYLKTIKRTGLGRGLFSEQRYRDDGSENPDFVLNKSAYRNARILVAGDNFGCGSSREHAPWALLDFGIRCVISTSFGDIFYNNCFKNGILPIRVTQADLDKLFDDAERGANATLTIDLANQEIRGPDGGTVKFEIDAFRKHCLLNGLDDIGLTMEKKAAIDSYEDKAKRERAWA.

This sequence belongs to the LeuD family. LeuD type 1 subfamily. As to quaternary structure, heterodimer of LeuC and LeuD.

The enzyme catalyses (2R,3S)-3-isopropylmalate = (2S)-2-isopropylmalate. Its pathway is amino-acid biosynthesis; L-leucine biosynthesis; L-leucine from 3-methyl-2-oxobutanoate: step 2/4. Functionally, catalyzes the isomerization between 2-isopropylmalate and 3-isopropylmalate, via the formation of 2-isopropylmaleate. This Nitrobacter winogradskyi (strain ATCC 25391 / DSM 10237 / CIP 104748 / NCIMB 11846 / Nb-255) protein is 3-isopropylmalate dehydratase small subunit.